An 88-amino-acid chain; its full sequence is Small ribosomal subunit protein uS17 (88 aa).

Belongs to the universal ribosomal protein uS17 family. In terms of assembly, part of the 30S ribosomal subunit.

One of the primary rRNA binding proteins, it binds specifically to the 5'-end of 16S ribosomal RNA. This chain is Small ribosomal subunit protein uS17, found in Prochlorococcus marinus (strain MIT 9303).